Reading from the N-terminus, the 493-residue chain is Probable cytosol aminopeptidase (493 aa).

Residues K258 and D263 each coordinate Mn(2+). K270 is an active-site residue. Residues D281, D340, and E342 each coordinate Mn(2+). R344 is a catalytic residue.

Belongs to the peptidase M17 family. The cofactor is Mn(2+).

It is found in the cytoplasm. It carries out the reaction Release of an N-terminal amino acid, Xaa-|-Yaa-, in which Xaa is preferably Leu, but may be other amino acids including Pro although not Arg or Lys, and Yaa may be Pro. Amino acid amides and methyl esters are also readily hydrolyzed, but rates on arylamides are exceedingly low.. It catalyses the reaction Release of an N-terminal amino acid, preferentially leucine, but not glutamic or aspartic acids.. Presumably involved in the processing and regular turnover of intracellular proteins. Catalyzes the removal of unsubstituted N-terminal amino acids from various peptides. The sequence is that of Probable cytosol aminopeptidase from Caulobacter vibrioides (strain ATCC 19089 / CIP 103742 / CB 15) (Caulobacter crescentus).